The chain runs to 976 residues: MVKSKVKKVEKGKEGEEKRSTYVLLKKVLIPILVFGFAIYAFYLRHLTAGKYFPDPDTFYHFEIYKLVLKEGLPRYYPMSDAPFGSLIGEPLGLYLLPAAFYKVVSLFGYNELQAFLLWPPFVGFLGVIAVYLLGRKVLNEWTGLWGAVVLTVSTANFSRTFSGNARGDGPFMALFIFASVAMLYYLKESNKTRKIIYGTLFVLLTVISLGAWNGSPFGLMVLLGFASLQTIILFIFGKLEELKKFVKEFYPAYLAILAFGYALTFPGIVKIGGFIRFAFEVFLGLIFLLVIMLYGGRYLNYSDKKHRFLVVTIIVLLGFGGAYAYVGPKLFRLMGGAYQSTQVYETVQELAKTTIGDVKAYYGVESGNGLIFFLSIPGLLILLTKYLYDLFKKAKSDNETLFALVFYTMSLYLLYLAVRFLFLASYAVALFFGIFIGFSMDVIEKMKENIGIKAALGIVLSLMILVIPFVHAPVLARSARALKNTEIEVTGWEQALKWLRSNTSKYATATSWWDYGYWIESSLLGNRRASADGGHARDRDHILALFLARDGNISEVDFESWELNYFIIYLNDWAKFNAISYLGGAITRKEYNGDENGRGRVTTILLTQAAGNVYVNPYARIVIKVIQQNKTRRIAVNIGQLECSPILSVAFPGNIKIKGSGRCSDGSPFPYVVYLTPSLGVLAYYKVATSNFVKLAFGIPTSSYSEFAEKLFSNFIPVYQYGSVIVYEFRPFAIYKIEDFINGTWREVGKLSPGKHTLRLYISAFGRDIKNATLYVYALNGTKIIKRIKVGEIKYMNHLEEYPIIVNVTLPTAQKYRFILAQKGPVGVLTGPVRVNGKITNPAYIMREGESGRLELKVGVDKEYTADLYLRATFIYLVRKGGKSNEDYDASFEPHMDTFFITKLKEGIKLRPGENEIVVNAEMPKNAISSYKEKLEKEHGDKLIIRGIRVEPVFIVEKEYTMIEVSASAPHHSSE.

Over 1-21 the chain is Cytoplasmic; sequence MVKSKVKKVEKGKEGEEKRST. The chain crosses the membrane as a helical span at residues 22–42; it reads YVLLKKVLIPILVFGFAIYAF. Residues 43–112 are Extracellular-facing; the sequence is YLRHLTAGKY…KVVSLFGYNE (70 aa). The short motif at 55–57 is the DXD motif 1 element; it reads DPD. D57 contacts Mn(2+). The chain crosses the membrane as a helical span at residues 113 to 133; that stretch reads LQAFLLWPPFVGFLGVIAVYL. Residues 134–135 are Cytoplasmic-facing; sequence LG. The helical transmembrane segment at 136–156 threads the bilayer; it reads RKVLNEWTGLWGAVVLTVSTA. Topologically, residues 157-165 are extracellular; it reads NFSRTFSGN. Residues 166–186 form a helical membrane-spanning segment; that stretch reads ARGDGPFMALFIFASVAMLYY. The Mn(2+) site is built by R167 and D169. Residues 167–169 carry the DXD motif 2 motif; the sequence is RGD. The Cytoplasmic segment spans residues 187-193; that stretch reads LKESNKT. The chain crosses the membrane as a helical span at residues 194-214; sequence RKIIYGTLFVLLTVISLGAWN. Residue G215 is a topological domain, extracellular. A helical membrane pass occupies residues 216 to 236; the sequence is SPFGLMVLLGFASLQTIILFI. Residues 237 to 247 are Cytoplasmic-facing; that stretch reads FGKLEELKKFV. Residues 248–268 form a helical membrane-spanning segment; it reads KEFYPAYLAILAFGYALTFPG. Position 269 (I269) is a topological domain, extracellular. A helical transmembrane segment spans residues 270–290; the sequence is VKIGGFIRFAFEVFLGLIFLL. At 291-306 the chain is on the cytoplasmic side; sequence VIMLYGGRYLNYSDKK. The helical transmembrane segment at 307–327 threads the bilayer; sequence HRFLVVTIIVLLGFGGAYAYV. Topologically, residues 328-360 are extracellular; it reads GPKLFRLMGGAYQSTQVYETVQELAKTTIGDVK. Positions 347 to 350 match the TIXE motif motif; the sequence is TVQE. Residues 361-381 traverse the membrane as a helical segment; the sequence is AYYGVESGNGLIFFLSIPGLL. At 382–396 the chain is on the cytoplasmic side; it reads ILLTKYLYDLFKKAK. A helical transmembrane segment spans residues 397-417; that stretch reads SDNETLFALVFYTMSLYLLYL. A418 is a topological domain (extracellular). Residues 419–439 traverse the membrane as a helical segment; the sequence is VRFLFLASYAVALFFGIFIGF. R420 is a binding site for a glycophospholipid. Residues 440–453 are Cytoplasmic-facing; the sequence is SMDVIEKMKENIGI. A helical membrane pass occupies residues 454–474; the sequence is KAALGIVLSLMILVIPFVHAP. Residues 475 to 976 are Extracellular-facing; it reads VLARSARALK…SASAPHHSSE (502 aa). Residues 513–515 are interacts with target acceptor peptide in protein substrate; that stretch reads WWD. Positions 513 to 517 match the WWDYG motif motif; the sequence is WWDYG. Y518 lines the a glycophospholipid pocket. The DK motif signature appears at 573 to 580; it reads DWAKFNAI.

This sequence belongs to the STT3 family. Requires Mn(2+) as cofactor. Mg(2+) is required as a cofactor.

It is found in the cell membrane. It catalyses the reaction an archaeal dolichyl phosphooligosaccharide + [protein]-L-asparagine = an archaeal dolichyl phosphate + a glycoprotein with the oligosaccharide chain attached by N-beta-D-glycosyl linkage to a protein L-asparagine.. It participates in protein modification; protein glycosylation. Oligosaccharyl transferase (OST) that catalyzes the initial transfer of a defined glycan (ManNAcXyl(2)GlcAMan(2)GalNAc in Pyrococcus) from the lipid carrier dolichol-monophosphate to an asparagine residue within an Asn-X-Ser/Thr consensus motif in nascent polypeptide chains, the first step in protein N-glycosylation. The polypeptide is Dolichyl-phosphooligosaccharide-protein glycotransferase 1 (aglB1) (Pyrococcus horikoshii (strain ATCC 700860 / DSM 12428 / JCM 9974 / NBRC 100139 / OT-3)).